The sequence spans 339 residues: Annexin A2 (339 aa).

An N-acetylserine modification is found at Ser-2. Positions 2–24 are S100A10-binding site; the sequence is STVHEILCKLSLEGDHSTPPSAY. Tyr-24 bears the Phosphotyrosine; by SRC mark. A Phosphoserine; by PKC modification is found at Ser-26. 2 Annexin repeats span residues 33 to 104 and 105 to 176; these read FDAE…GLLK and TPAQ…ALAK. At Lys-49 the chain carries N6-acetyllysine; alternate. Lys-49 participates in a covalent cross-link: Glycyl lysine isopeptide (Lys-Gly) (interchain with G-Cter in SUMO1); alternate. A Glycyl lysine isopeptide (Lys-Gly) (interchain with G-Cter in SUMO2); alternate cross-link involves residue Lys-49. The residue at position 152 (Lys-152) is an N6-acetyllysine. Ser-184 bears the Phosphoserine mark. Annexin repeat units follow at residues 189 to 261 and 265 to 336; these read ELID…NLVQ and NKPL…YLCG. Tyr-199 is subject to Phosphotyrosine. Lys-227 is modified (N6-acetyllysine).

The protein belongs to the annexin family. Heterotetramer containing 2 light chains of S100A10/p11 and 2 heavy chains of ANXA2/p36. Interacts with ATP1B1. Interacts with DYSF. Interacts with COCH. Interacts (via repeat Annexin 1) with PCSK9 (via the C-terminal domain); the interaction inhibits the degradation of LDLR. Interacts with CEACAM1 (via the cytoplasmic domain); this interaction is regulated by phosphorylation of CEACAM1. Interacts with APPL2 and APPL1; targets APPL2 to endosomes and acting in parallel to RAB5A. Interacts with S100A4. May interact with UBAP2. Interacts with PLEKHG4B; this interaction is required for PLEKHG4B localization to cell-cell adhesions. Post-translationally, ISGylated.

The protein resides in the secreted. Its subcellular location is the extracellular space. It is found in the extracellular matrix. It localises to the basement membrane. The protein localises to the melanosome. Its function is as follows. Calcium-regulated membrane-binding protein whose affinity for calcium is greatly enhanced by anionic phospholipids. It binds two calcium ions with high affinity. May be involved in heat-stress response. Inhibits PCSK9-enhanced LDLR degradation, probably reduces PCSK9 protein levels via a translational mechanism but also competes with LDLR for binding with PCSK9. Binds to endosomes damaged by phagocytosis of particulate wear debris and participates in endosomal membrane stabilization, thereby limiting NLRP3 inflammasome activation. Required for endothelial cell surface plasmin generation and may support fibrinolytic surveillance and neoangiogenesis. This Bos taurus (Bovine) protein is Annexin A2 (ANXA2).